Reading from the N-terminus, the 157-residue chain is 2-C-methyl-D-erythritol 2,4-cyclodiphosphate synthase (157 aa).

2 residues coordinate a divalent metal cation: Asp-8 and His-10. 4-CDP-2-C-methyl-D-erythritol 2-phosphate-binding positions include 8-10 (DVH) and 34-35 (HS). Residue His-42 participates in a divalent metal cation binding. 4-CDP-2-C-methyl-D-erythritol 2-phosphate-binding positions include 56–58 (DIG), 61–65 (FPDTD), 100–106 (AQAPKMA), 132–135 (TTTE), Phe-139, and Arg-142.

The protein belongs to the IspF family. Homotrimer. The cofactor is a divalent metal cation.

The catalysed reaction is 4-CDP-2-C-methyl-D-erythritol 2-phosphate = 2-C-methyl-D-erythritol 2,4-cyclic diphosphate + CMP. It participates in isoprenoid biosynthesis; isopentenyl diphosphate biosynthesis via DXP pathway; isopentenyl diphosphate from 1-deoxy-D-xylulose 5-phosphate: step 4/6. Involved in the biosynthesis of isopentenyl diphosphate (IPP) and dimethylallyl diphosphate (DMAPP), two major building blocks of isoprenoid compounds. Catalyzes the conversion of 4-diphosphocytidyl-2-C-methyl-D-erythritol 2-phosphate (CDP-ME2P) to 2-C-methyl-D-erythritol 2,4-cyclodiphosphate (ME-CPP) with a corresponding release of cytidine 5-monophosphate (CMP). This is 2-C-methyl-D-erythritol 2,4-cyclodiphosphate synthase from Azotobacter vinelandii (strain DJ / ATCC BAA-1303).